Reading from the N-terminus, the 929-residue chain is Ras guanine nucleotide exchange factor M (929 aa).

Over residues 1–15 (MWQKPSLTKSMMNEV) the composition is skewed to polar residues. 2 disordered regions span residues 1-102 (MWQK…AAGS) and 169-316 (TNNN…SKSL). Residues 16–33 (SSNSPKSPTLTSSPSTQS) show a composition bias toward low complexity. A compositionally biased stretch (gly residues) spans 44-67 (LDGGGGGSNRLIFGGSGGGSGGGS). 2 stretches are compositionally biased toward low complexity: residues 68 to 80 (LPSSPVSSPVNPF) and 169 to 191 (TNNNTTTTTNTNNSNNNNSNNDG). A compositionally biased stretch (gly residues) spans 192 to 202 (SGSGSGAGGSF). Low complexity predominate over residues 203 to 246 (IGTTTSAKTTSTTSTSAATTTTTTTTSSSSSSPSSSSPSSTSPT). Polar residues predominate over residues 247-256 (IASNNDNNNK). A compositionally biased stretch (low complexity) spans 270–287 (PPLTLSQSQTQQQQQQKV). Over residues 295 to 305 (RFSTNSSGSQS) the composition is skewed to polar residues. The N-terminal Ras-GEF domain occupies 390 to 528 (NKFVVVSGPK…PILDLYEKLK (139 aa)). Positions 540 to 583 (SLSGSGGISNNNNGSDLKNSNNGNNSSNNNNSSSNSSSSSSSSD) are disordered. The Ras-GEF domain maps to 676–911 (SPQDIAKQLT…YAFSKFIESP (236 aa)).

Its function is as follows. Promotes the exchange of Ras-bound GDP by GTP. The sequence is that of Ras guanine nucleotide exchange factor M (gefM) from Dictyostelium discoideum (Social amoeba).